Here is a 392-residue protein sequence, read N- to C-terminus: Protein FAM53C (392 aa).

Methionine 1 carries the N-acetylmethionine modification. Residues 76-120 are disordered; sequence LHLRPPSPGSSPQEQSLSQVLSPEPPDPEKLPVPPAPPSKRHCRS. The span at 85 to 97 shows a compositional bias: low complexity; sequence SSPQEQSLSQVLS. Phosphoserine occurs at positions 122 and 162. Disordered stretches follow at residues 141-167 and 201-294; these read LWTPIKHRGSGGGGGPQVPHQSPPKRV and DSSH…EDPR. The segment covering 201-215 has biased composition (polar residues); sequence DSSHPSAASPQSGSW. Phosphoserine occurs at positions 232, 234, 255, and 273. Residues 241–256 show a composition bias toward low complexity; sequence ASRFLPSARSSPASSP. Basic and acidic residues predominate over residues 278-294; the sequence is LDARKAGVKRRHEEDPR. Residue serine 299 is modified to Phosphoserine.

It belongs to the FAM53 family.

This chain is Protein FAM53C, found in Bos taurus (Bovine).